The chain runs to 302 residues: Glutaminase (302 aa).

Residues Ser-61, Asn-111, Glu-155, Asn-162, Tyr-186, Tyr-238, and Val-256 each contribute to the substrate site.

It belongs to the glutaminase family. As to quaternary structure, homotetramer.

It catalyses the reaction L-glutamine + H2O = L-glutamate + NH4(+). The polypeptide is Glutaminase (Pseudomonas aeruginosa (strain ATCC 15692 / DSM 22644 / CIP 104116 / JCM 14847 / LMG 12228 / 1C / PRS 101 / PAO1)).